A 250-amino-acid chain; its full sequence is Ribosome-inactivating protein luffin-B (250 aa).

Glutamate 160 is an active-site residue.

The protein belongs to the ribosome-inactivating protein family. Type 1 RIP subfamily.

The catalysed reaction is Endohydrolysis of the N-glycosidic bond at one specific adenosine on the 28S rRNA.. The chain is Ribosome-inactivating protein luffin-B from Luffa aegyptiaca (Sponge gourd).